We begin with the raw amino-acid sequence, 500 residues long: Chromosomal replication initiator protein DnaA (500 aa).

The domain I, interacts with DnaA modulators stretch occupies residues 1–81; that stretch reads MVNASGDPVI…LQALRTVTGE (81 aa). The tract at residues 81–155 is domain II; that stretch reads ENMFPAFKVV…QQKMNRDPET (75 aa). The interval 156–377 is domain III, AAA+ region; the sequence is HLNKNFTFDS…GALTRVTAVA (222 aa). Residues glycine 200, glycine 202, lysine 203, and threonine 204 each contribute to the ATP site. The interval 378 to 500 is domain IV, binds dsDNA; it reads SLSNQPVTRA…TVRLKQSNTN (123 aa).

This sequence belongs to the DnaA family. In terms of assembly, oligomerizes as a right-handed, spiral filament on DNA at oriC.

The protein localises to the cytoplasm. Functionally, plays an essential role in the initiation and regulation of chromosomal replication. ATP-DnaA binds to the origin of replication (oriC) to initiate formation of the DNA replication initiation complex once per cell cycle. Binds the DnaA box (a 9 base pair repeat at the origin) and separates the double-stranded (ds)DNA. Forms a right-handed helical filament on oriC DNA; dsDNA binds to the exterior of the filament while single-stranded (ss)DNA is stabiized in the filament's interior. The ATP-DnaA-oriC complex binds and stabilizes one strand of the AT-rich DNA unwinding element (DUE), permitting loading of DNA polymerase. After initiation quickly degrades to an ADP-DnaA complex that is not apt for DNA replication. Binds acidic phospholipids. This is Chromosomal replication initiator protein DnaA from Bifidobacterium longum (strain DJO10A).